The chain runs to 360 residues: tRNA/tmRNA (uracil-C(5))-methyltransferase (360 aa).

Residues Gln-185, Tyr-213, Asn-218, Glu-234, and Asp-294 each contribute to the S-adenosyl-L-methionine site. Cys-319 functions as the Nucleophile in the catalytic mechanism. The Proton acceptor role is filled by Glu-353.

The protein belongs to the class I-like SAM-binding methyltransferase superfamily. RNA M5U methyltransferase family. TrmA subfamily.

It carries out the reaction uridine(54) in tRNA + S-adenosyl-L-methionine = 5-methyluridine(54) in tRNA + S-adenosyl-L-homocysteine + H(+). It catalyses the reaction uridine(341) in tmRNA + S-adenosyl-L-methionine = 5-methyluridine(341) in tmRNA + S-adenosyl-L-homocysteine + H(+). Dual-specificity methyltransferase that catalyzes the formation of 5-methyluridine at position 54 (m5U54) in all tRNAs, and that of position 341 (m5U341) in tmRNA (transfer-mRNA). In Nitratiruptor sp. (strain SB155-2), this protein is tRNA/tmRNA (uracil-C(5))-methyltransferase.